The following is a 140-amino-acid chain: Translation initiation factor 2 subunit beta (140 aa).

The protein belongs to the eIF-2-beta/eIF-5 family. Heterotrimer composed of an alpha, a beta and a gamma chain.

Functionally, eIF-2 functions in the early steps of protein synthesis by forming a ternary complex with GTP and initiator tRNA. This is Translation initiation factor 2 subunit beta from Pyrococcus furiosus (strain ATCC 43587 / DSM 3638 / JCM 8422 / Vc1).